A 490-amino-acid chain; its full sequence is Dual specificity protein kinase CLK3 (490 aa).

The disordered stretch occupies residues M1–D138. Phosphotyrosine is present on Y7. Phosphoserine occurs at positions 9, 49, 51, 67, 76, and 78. 2 stretches are compositionally biased toward basic and acidic residues: residues Y26–P56 and E63–S76. Residues R88–R116 are compositionally biased toward basic residues. Residues S117–K130 show a composition bias toward low complexity. S135 carries the post-translational modification Phosphoserine. In terms of domain architecture, Protein kinase spans Y156 to F472. Residues L162–V170 and K186 each bind ATP. D283 functions as the Proton acceptor in the catalytic mechanism.

The protein belongs to the protein kinase superfamily. CMGC Ser/Thr protein kinase family. Lammer subfamily. In terms of processing, autophosphorylates on all three types of residues. Endothelial cells.

It is found in the nucleus. It localises to the cytoplasm. The protein localises to the cytoplasmic vesicle. The protein resides in the secretory vesicle. Its subcellular location is the acrosome. It is found in the nucleus speckle. The enzyme catalyses L-seryl-[protein] + ATP = O-phospho-L-seryl-[protein] + ADP + H(+). The catalysed reaction is L-threonyl-[protein] + ATP = O-phospho-L-threonyl-[protein] + ADP + H(+). It carries out the reaction L-tyrosyl-[protein] + ATP = O-phospho-L-tyrosyl-[protein] + ADP + H(+). With respect to regulation, leucettine L41 inhibits its kinase activity and affects the regulation of alternative splicing mediated by phosphorylation of SR proteins. In terms of biological role, dual specificity kinase acting on both serine/threonine and tyrosine-containing substrates. Phosphorylates serine- and arginine-rich (SR) proteins of the spliceosomal complex. May be a constituent of a network of regulatory mechanisms that enable SR proteins to control RNA splicing and can cause redistribution of SR proteins from speckles to a diffuse nucleoplasmic distribution. Phosphorylates SRSF1 and SRSF3. Regulates the alternative splicing of tissue factor (F3) pre-mRNA in endothelial cells. This Homo sapiens (Human) protein is Dual specificity protein kinase CLK3.